Consider the following 352-residue polypeptide: MENIMLQEIELKLAISPQIGIELPQYLAKFTILEHQNLFLGNTYYDYPDHFLAKQKMGLRIRQEDQELTLTLKTNGKVVSGLHSRPEYNLPLIEKETPTNAQLRGLYPFEQLPSSTLQPIFSTDFNRTFWLVEFQQSKIEVAFDQGKIIAGEYEQPISEIEFELKSGNVQDLFDFVETLPFERDIYFSSASKAKRGYLLGSKQFLTDWLNKWRDFLKEEREESAVDFCAKFNAVLKMEQKLLEETLSFSPTLFSQDFMKTVERVGAFFNLYHYYDENGKILEAMATEKQKETRLPALLESNQKIFVEIRDLIRFHSETKDNEKTIEKLTALLKSRVYFERMIKLMELSYDLG.

The CYTH domain maps to 6–203; it reads LQEIELKLAI…KRGYLLGSKQ (198 aa).

The catalysed reaction is triphosphate + H2O = phosphate + diphosphate. In terms of biological role, involved in the hydrolysis of the beta-gamma-phosphoanhydride linkage of triphosphate-containing substrates (inorganic or nucleoside-linked). Catalyzes the hydrolysis of inorganic triphosphate (PPPi), which could be cytotoxic because of its high affinity for calcium ion, thereby interfering with calcium signaling. In Haemophilus influenzae (strain ATCC 51907 / DSM 11121 / KW20 / Rd), this protein is Inorganic triphosphatase.